The primary structure comprises 103 residues: Large ribosomal subunit protein bL21 (103 aa).

Belongs to the bacterial ribosomal protein bL21 family. In terms of assembly, part of the 50S ribosomal subunit. Contacts protein L20.

This protein binds to 23S rRNA in the presence of protein L20. This is Large ribosomal subunit protein bL21 from Wolinella succinogenes (strain ATCC 29543 / DSM 1740 / CCUG 13145 / JCM 31913 / LMG 7466 / NCTC 11488 / FDC 602W) (Vibrio succinogenes).